The following is an 874-amino-acid chain: MSVSSVVTKESFKKKDVNMNIQEKDINDFVQSASRVIAPLWPISTFAARHPWVGLEKQSFEQVADWLKEIRDVDIYPSASMIHSAKRRGEIDESFLYAGLHRWLDSQSFHIPREKVERYCQAALKLDKLPSHLLLSKELNTLAAEINNVNTESTEDFSMQPISSLIENQDSERLANILDYHVIKWCKLYLDNFQSSWAMPNREKGFYHAWHHLIKYDPALSKQQRKALKDWPQDANAALVRALSELKIPKSKIQTYLEGHLLSLPGWAGIILWRSKQSIREHALLTEYLAVRISMEWAIVNPYLSLVNHRLKKKVSIVPLLASWIHWGDLSIEEWSQMSATEQNELLSIAHHFDEKLRRKLWWEAWEQTHAERLSQEILSKQCVNNKKKFVLAQMAFCIDVRSEPFRRQLEKAGPFETIGIAGFFGLPIATSELGSHHSHPSLPVMQKPKHRIKELASEDELKSYQQRKKVDHSLSYTFKMMKQNVLTSLLLPELSGPFLGLQMIARSFVPRRLGSFIRNLRKTWLRKPDTRFSLDYAHDTESEIPIGFSKEEKVNYVRQTLKMMGLTENFAPLVVICGHSSQSTNNPYAAALECGACGGAAGGFNARIFATLCNLPEVREGLSAEGIKIPEDTVFAAAEHKTTVDELEWIYIPELSESAREALNHIEAIMPKVSHNANRERLAQLPNFKTKMKNPRAEAHRFAEDWSEIRPEWGLARNASFIIGQRELTQDCDLEGRAFLHNYDWKQDESGDILASIIAGPGTVAQWINLQYYASTVAPHYYGSGNKATQTVTAGLGVMQGNASDLLSGVPWQSVMQSDDEAYHSPLRLLIVIQAPSQYIERLLNNDFIFREKVQNGWVRLASVDPEVGWKNW.

Residues C398, D400, H580, and C595 each contribute to the Zn(2+) site.

It belongs to the inorganic carbon transporter (TC 9.A.2) DabA family. Forms a complex with DabB. Zn(2+) is required as a cofactor.

It is found in the cell membrane. In terms of biological role, part of an energy-coupled inorganic carbon pump. The protein is Probable inorganic carbon transporter subunit DabA of Bacillus cytotoxicus (strain DSM 22905 / CIP 110041 / 391-98 / NVH 391-98).